A 364-amino-acid polypeptide reads, in one-letter code: MNRASLKRSKILHMALMGTSDPSGEAEASQEKPFVLRALQIALVVSLYWVTSISMVFLNKYLLDSPSLRLDTPIFVTFYQCLVTVLLCKGLSSLATCCPGTVDFPALHLDLKVARSVLPLSVVFIGMITFNNLCLKYVGVAFYNVGRSLTTVFNVLLSYLLLKQTTSFYALLTCSVIIGGFWLGVDQEGAEGTLSWTGTLFGVLASLCVSLNAIYTKKVLPAVDGSIWRLTFYNNANACVLFLPLLLALGELRALLAFPQLGSAHFWAMMTLGGLFGFAIGYVTGLQIKFTSPLTHNVSGTAKACAQTVLAVLYYEEAKSFLWWTSNMMVLGGSSAYTWVRGREMKKTQEEPHPRENEKSNMEV.

The next 8 helical transmembrane spans lie at 34-56, 76-98, 111-130, 140-162, 167-185, 195-214, 227-249, and 264-286; these read FVLR…ISMV, VTFY…ATCC, LKVA…MITF, VAFY…YLLL, SFYA…WLGV, SWTG…LNAI, IWRL…LLAL, and AHFW…VTGL. The segment at 345–364 is disordered; it reads MKKTQEEPHPRENEKSNMEV.

The protein belongs to the TPT transporter family. SLC35C subfamily.

Its subcellular location is the golgi apparatus membrane. The enzyme catalyses GMP(out) + GDP-beta-L-fucose(in) = GMP(in) + GDP-beta-L-fucose(out). Antiporter specific for GDP-l-fucose and depending on the concomitant reverse transport of GMP. Involved in GDP-fucose import from the cytoplasm into the Golgi lumen. The protein is GDP-fucose transporter 1 (SLC35C1) of Bos taurus (Bovine).